Reading from the N-terminus, the 108-residue chain is Nucleoid-associated protein BQ02190 (108 aa).

It belongs to the YbaB/EbfC family. As to quaternary structure, homodimer.

The protein resides in the cytoplasm. Its subcellular location is the nucleoid. Binds to DNA and alters its conformation. May be involved in regulation of gene expression, nucleoid organization and DNA protection. This Bartonella quintana (strain Toulouse) (Rochalimaea quintana) protein is Nucleoid-associated protein BQ02190.